A 357-amino-acid polypeptide reads, in one-letter code: Alanine racemase (357 aa).

Lys33 functions as the Proton acceptor; specific for D-alanine in the catalytic mechanism. Lys33 carries the N6-(pyridoxal phosphate)lysine modification. Substrate is bound at residue Arg130. The active-site Proton acceptor; specific for L-alanine is Tyr252. Met300 contacts substrate.

It belongs to the alanine racemase family. Pyridoxal 5'-phosphate serves as cofactor.

The catalysed reaction is L-alanine = D-alanine. The protein operates within amino-acid biosynthesis; D-alanine biosynthesis; D-alanine from L-alanine: step 1/1. Its function is as follows. Catalyzes the interconversion of L-alanine and D-alanine. May also act on other amino acids. In Acidiphilium cryptum (strain JF-5), this protein is Alanine racemase (alr).